The primary structure comprises 61 residues: Small ribosomal subunit protein uS14 (61 aa).

Residues Cys24, Cys27, Cys40, and Cys43 each contribute to the Zn(2+) site.

It belongs to the universal ribosomal protein uS14 family. Zinc-binding uS14 subfamily. As to quaternary structure, part of the 30S ribosomal subunit. Contacts proteins S3 and S10. It depends on Zn(2+) as a cofactor.

Functionally, binds 16S rRNA, required for the assembly of 30S particles and may also be responsible for determining the conformation of the 16S rRNA at the A site. The chain is Small ribosomal subunit protein uS14 from Mycoplasma mobile (strain ATCC 43663 / 163K / NCTC 11711) (Mesomycoplasma mobile).